Here is a 1034-residue protein sequence, read N- to C-terminus: Potassium-transporting ATPase alpha chain 1 (1034 aa).

The Cytoplasmic segment spans residues 1 to 97; that stretch reads MGKAENYELY…NALRPPRGTP (97 aa). Tyr-7 and Tyr-10 each carry phosphotyrosine. The disordered stretch occupies residues 14 to 41; sequence LGSGPGGDMTAKMSKKKAGGGGGKKKEK. Residues 26 to 39 are compositionally biased toward basic residues; it reads MSKKKAGGGGGKKK. A Phosphoserine modification is found at Ser-27. A helical membrane pass occupies residues 98–118; that stretch reads EYVKFARQLAGGLQCLMWVAA. Over 119–141 the chain is Lumenal; the sequence is AICLIAFAIQASEGDLTTDDNLY. The helical transmembrane segment at 142 to 162 threads the bilayer; that stretch reads LAVALIAVVVVTGCFGYYQEF. Over 163 to 298 the chain is Cytoplasmic; sequence KSTNIIASFK…NEKTPIAIEI (136 aa). Residues 299 to 318 form a helical membrane-spanning segment; it reads EHFVDIIAGLAILFGATFFV. The Lumenal segment spans residues 319–330; it reads VAMCIGYTFLRA. Residues 331–348 traverse the membrane as a helical segment; it reads MVFFMAIVVAYVPEGLLA. Val-339, Ala-340, Val-342, and Glu-344 together coordinate K(+). The Cytoplasmic portion of the chain corresponds to 349–782; that stretch reads TVTVCLSLTA…EQGRLIFDNL (434 aa). Asp-386 functions as the 4-aspartylphosphate intermediate in the catalytic mechanism. Mg(2+) is bound by residues Asp-386 and Thr-388. A phosphoserine mark is found at Ser-462 and Ser-600. Positions 727 and 731 each coordinate Mg(2+). A helical transmembrane segment spans residues 783–802; that stretch reads KKSIAYTLTKNIPELTPYLI. Glu-796 contacts K(+). Topologically, residues 803-812 are lumenal; it reads YITVSVPLPL. The helical transmembrane segment at 813–833 threads the bilayer; sequence GCITILFIELCTDIFPSVSLA. Glu-821 contacts K(+). Topologically, residues 834-853 are cytoplasmic; sequence YEKAESDIMHLRPRNPKRDR. Ser-839 carries the post-translational modification Phosphoserine. A helical membrane pass occupies residues 854–876; sequence LVNEPLAAYSYFQIGAIQSFAGF. Residues 877–928 lie on the Lumenal side of the membrane; it reads ADYFTAMAQEGWFPLLCVGLRPQWEDHHLQDLQDSYGQEWTFGQRLYQQYTC. The chain crosses the membrane as a helical span at residues 929–948; sequence YTVFFISIEMCQIADVLIRK. The Cytoplasmic portion of the chain corresponds to 949–962; sequence TRRLSVFQQGFFRN. The residue at position 953 (Ser-953) is a Phosphoserine; by PKA. The chain crosses the membrane as a helical span at residues 963-981; it reads KILVIAIVFQVCIGCFLCY. Residues 982–996 are Lumenal-facing; it reads CPGMPNIFNFMPIRF. A helical membrane pass occupies residues 997–1017; that stretch reads QWWLVPMPFGLLIFVYDEIRK. The Cytoplasmic segment spans residues 1018-1034; the sequence is LGVRCCPGSWWDQELYY.

The protein belongs to the cation transport ATPase (P-type) (TC 3.A.3) family. Type IIC subfamily. As to quaternary structure, the gastric H(+)/K(+) ATPase pump is composed of the catalytic alpha subunit ATP4A and the regulatory beta subunit ATP4B. Interacts (via the P-domain) with ATP4B (via N-terminus); this interaction stabilizes the lumenal-open E2 conformation state and prevents the reverse reaction of the transport cycle. Expressed in parietal cells (at protein level).

Its subcellular location is the apical cell membrane. It catalyses the reaction K(+)(out) + ATP + H2O + H(+)(in) = K(+)(in) + ADP + phosphate + 2 H(+)(out). Its function is as follows. The catalytic subunit of the gastric H(+)/K(+) ATPase pump which transports H(+) ions in exchange for K(+) ions across the apical membrane of parietal cells. Uses ATP as an energy source to pump H(+) ions to the gastric lumen while transporting K(+) ion from the lumen into the cell. Remarkably generates a million-fold proton gradient across the gastric parietal cell membrane, acidifying the gastric juice down to pH 1. Within a transport cycle, the transfer of a H(+) ion across the membrane is coupled to ATP hydrolysis and is associated with a transient phosphorylation that shifts the pump conformation from inward-facing (E1) to outward-facing state (E2). The release of the H(+) ion in the stomach lumen is followed by binding of K(+) ion converting the pump conformation back to the E1 state. In Mus musculus (Mouse), this protein is Potassium-transporting ATPase alpha chain 1.